Here is a 280-residue protein sequence, read N- to C-terminus: Putative pyruvate, phosphate dikinase regulatory protein (280 aa).

158-165 (GVSRTSKT) lines the ADP pocket.

Belongs to the pyruvate, phosphate/water dikinase regulatory protein family. PDRP subfamily.

It catalyses the reaction N(tele)-phospho-L-histidyl/L-threonyl-[pyruvate, phosphate dikinase] + ADP = N(tele)-phospho-L-histidyl/O-phospho-L-threonyl-[pyruvate, phosphate dikinase] + AMP + H(+). It carries out the reaction N(tele)-phospho-L-histidyl/O-phospho-L-threonyl-[pyruvate, phosphate dikinase] + phosphate + H(+) = N(tele)-phospho-L-histidyl/L-threonyl-[pyruvate, phosphate dikinase] + diphosphate. In terms of biological role, bifunctional serine/threonine kinase and phosphorylase involved in the regulation of the pyruvate, phosphate dikinase (PPDK) by catalyzing its phosphorylation/dephosphorylation. This chain is Putative pyruvate, phosphate dikinase regulatory protein, found in Lactobacillus johnsonii (strain CNCM I-12250 / La1 / NCC 533).